A 198-amino-acid polypeptide reads, in one-letter code: Probable minor pilin MMP0709 (198 aa).

Residues 1–5 constitute a propeptide that is removed on maturation; sequence MSNRG. The QXSXEXXXL signature appears at 6–14; the sequence is QLSIEMVIL.

In terms of processing, the N-terminus is probably cleaved by the prepilin peptidase EppA, which recognizes the class III signal sequence.

It is found in the secreted. Its subcellular location is the cell surface. It localises to the fimbrium. The protein is Probable minor pilin MMP0709 of Methanococcus maripaludis (strain DSM 14266 / JCM 13030 / NBRC 101832 / S2 / LL).